Here is a 282-residue protein sequence, read N- to C-terminus: Aquaporin-6 (282 aa).

Over 1 to 25 (MDAVEPGGRGWASMLACRLWKAISR) the chain is Cytoplasmic. A helical transmembrane segment spans residues 26–46 (ALFAEFLATGLYVFFGVGSVM). At 47–54 (RWPTALPS) the chain is on the extracellular side. A helical transmembrane segment spans residues 55–73 (VLQIAITFNLVTAMAVQVT). Residues 74-78 (WKASG) are Cytoplasmic-facing. Positions 79 to 88 (AHANPAVTLA) form an intramembrane region, discontinuously helical. An NPA 1 motif is present at residues 82 to 84 (NPA). Residues 89-99 (FLVGSHISLPR) are Cytoplasmic-facing. A helical membrane pass occupies residues 100–121 (AVAYVAAQLVGATVGAALLYGV). Residues 122-141 (MPGDIRETLGINVVRNSVST) lie on the Extracellular side of the membrane. Residues 142-162 (GQAVAVELLLTLQLVLCVFAS) traverse the membrane as a helical segment. Topologically, residues 163-168 (TDSRQT) are cytoplasmic. A helical transmembrane segment spans residues 169–188 (SGSPATMIGISVALGHLIGI). Residues 189–192 (HFTG) lie on the Extracellular side of the membrane. Residues 193–205 (CSMNPARSFGPAI) constitute an intramembrane region (discontinuously helical). Positions 196–198 (NPA) match the NPA 2 motif. Topologically, residues 206 to 213 (IIGKFTVH) are extracellular. The helical transmembrane segment at 214–234 (WVFWVGPLMGALLASLIYNFV) threads the bilayer. The Cytoplasmic portion of the chain corresponds to 235–282 (LFPDTKTLAQRLAILTGTVEVGTGAGAGAEPLKKESQPGSGAVEMESV). A disordered region spans residues 260 to 282 (GAGAEPLKKESQPGSGAVEMESV).

The protein belongs to the MIP/aquaporin (TC 1.A.8) family. As to quaternary structure, homotetramer; each monomer provides an independent solute pore.

The protein resides in the cytoplasmic vesicle membrane. The enzyme catalyses nitrate(in) = nitrate(out). It catalyses the reaction iodide(out) = iodide(in). It carries out the reaction bromide(in) = bromide(out). The catalysed reaction is chloride(in) = chloride(out). The enzyme catalyses Na(+)(in) = Na(+)(out). It catalyses the reaction H2O(in) = H2O(out). It carries out the reaction CO2(out) = CO2(in). The catalysed reaction is NH4(+)(in) = NH4(+)(out). Aquaporins form homotetrameric transmembrane channels, with each monomer independently mediating water transport across the plasma membrane along its osmotic gradient. Unlike classical aquaporins, AQP6 is an intracellular channel with selective anion permeability, particularly for nitrate, and exhibits very low water permeability. It may also facilitate the transport of gases, such as CO2 and NH4(+), as demonstrated in vitro. The sequence is that of Aquaporin-6 from Homo sapiens (Human).